Reading from the N-terminus, the 361-residue chain is 3-dehydroquinate synthase (361 aa).

Residues 71-76 (DGEQNK), 105-109 (GVIGD), 129-130 (TT), Lys142, Lys151, and 169-172 (CLNT) contribute to the NAD(+) site. Zn(2+)-binding residues include Glu184, His247, and His264.

The protein belongs to the sugar phosphate cyclases superfamily. Dehydroquinate synthase family. Co(2+) is required as a cofactor. Zn(2+) serves as cofactor. Requires NAD(+) as cofactor.

The protein resides in the cytoplasm. It carries out the reaction 7-phospho-2-dehydro-3-deoxy-D-arabino-heptonate = 3-dehydroquinate + phosphate. It functions in the pathway metabolic intermediate biosynthesis; chorismate biosynthesis; chorismate from D-erythrose 4-phosphate and phosphoenolpyruvate: step 2/7. Its function is as follows. Catalyzes the conversion of 3-deoxy-D-arabino-heptulosonate 7-phosphate (DAHP) to dehydroquinate (DHQ). This chain is 3-dehydroquinate synthase, found in Sodalis glossinidius (strain morsitans).